The primary structure comprises 232 residues: Ion-translocating oxidoreductase complex subunit E (232 aa).

6 helical membrane passes run glycine 18–alanine 38, leucine 39–valine 59, isoleucine 69–alanine 89, glycine 93–glycine 113, alanine 127–alanine 147, and proline 182–leucine 202.

Belongs to the NqrDE/RnfAE family. In terms of assembly, the complex is composed of six subunits: RnfA, RnfB, RnfC, RnfD, RnfE and RnfG.

The protein localises to the cell inner membrane. Functionally, part of a membrane-bound complex that couples electron transfer with translocation of ions across the membrane. In Shewanella sp. (strain ANA-3), this protein is Ion-translocating oxidoreductase complex subunit E.